The following is a 136-amino-acid chain: Acyl carrier protein 2, chloroplastic (136 aa).

Residues 1-51 (MASIAASASISLQARPRQLAIAASQVKSFSNGRRSSLSFNLRQLPTRLTVS) constitute a chloroplast transit peptide. The Carrier domain maps to 56–131 (PETVDKVCAV…QAAALIEELL (76 aa)). Residue serine 91 is modified to O-(pantetheine 4'-phosphoryl)serine.

The protein belongs to the acyl carrier protein (ACP) family. Post-translationally, 4'-phosphopantetheine is transferred from CoA to a specific serine of apo-ACP by acpS. This modification is essential for activity because fatty acids are bound in thioester linkage to the sulfhydryl of the prosthetic group.

The protein resides in the plastid. It localises to the chloroplast. In terms of biological role, carrier of the growing fatty acid chain in fatty acid biosynthesis. This Arabidopsis thaliana (Mouse-ear cress) protein is Acyl carrier protein 2, chloroplastic (ACP2).